The following is a 197-amino-acid chain: Holliday junction branch migration complex subunit RuvA (197 aa).

Residues 1–64 form a domain I region; the sequence is MIASVRGTLI…EDALTLYGFK (64 aa). The tract at residues 65–145 is domain II; sequence TVEQRQLFET…GLPVAPGVSP (81 aa). The segment at 146–153 is flexible linker; it reads AVAAVNAE. Positions 153–197 are domain III; the sequence is ELSEMLVSLGFSSAEASTAIAALPPDAPLDLEERLRLALRYFGAR.

It belongs to the RuvA family. In terms of assembly, homotetramer. Forms an RuvA(8)-RuvB(12)-Holliday junction (HJ) complex. HJ DNA is sandwiched between 2 RuvA tetramers; dsDNA enters through RuvA and exits via RuvB. An RuvB hexamer assembles on each DNA strand where it exits the tetramer. Each RuvB hexamer is contacted by two RuvA subunits (via domain III) on 2 adjacent RuvB subunits; this complex drives branch migration. In the full resolvosome a probable DNA-RuvA(4)-RuvB(12)-RuvC(2) complex forms which resolves the HJ.

Its subcellular location is the cytoplasm. Functionally, the RuvA-RuvB-RuvC complex processes Holliday junction (HJ) DNA during genetic recombination and DNA repair, while the RuvA-RuvB complex plays an important role in the rescue of blocked DNA replication forks via replication fork reversal (RFR). RuvA specifically binds to HJ cruciform DNA, conferring on it an open structure. The RuvB hexamer acts as an ATP-dependent pump, pulling dsDNA into and through the RuvAB complex. HJ branch migration allows RuvC to scan DNA until it finds its consensus sequence, where it cleaves and resolves the cruciform DNA. The protein is Holliday junction branch migration complex subunit RuvA of Roseiflexus castenholzii (strain DSM 13941 / HLO8).